The primary structure comprises 106 residues: Phosphoribosyl-ATP pyrophosphatase (106 aa).

It belongs to the PRA-PH family.

The protein localises to the cytoplasm. It carries out the reaction 1-(5-phospho-beta-D-ribosyl)-ATP + H2O = 1-(5-phospho-beta-D-ribosyl)-5'-AMP + diphosphate + H(+). Its pathway is amino-acid biosynthesis; L-histidine biosynthesis; L-histidine from 5-phospho-alpha-D-ribose 1-diphosphate: step 2/9. The sequence is that of Phosphoribosyl-ATP pyrophosphatase from Geotalea daltonii (strain DSM 22248 / JCM 15807 / FRC-32) (Geobacter daltonii).